A 178-amino-acid polypeptide reads, in one-letter code: Small ribosomal subunit protein uS5 (178 aa).

Positions 17–80 (FEERIVEIRR…AAARASVVEI (64 aa)) constitute an S5 DRBM domain.

Belongs to the universal ribosomal protein uS5 family. In terms of assembly, part of the 30S ribosomal subunit. Contacts proteins S4 and S8.

Its function is as follows. With S4 and S12 plays an important role in translational accuracy. In terms of biological role, located at the back of the 30S subunit body where it stabilizes the conformation of the head with respect to the body. This is Small ribosomal subunit protein uS5 from Pseudothermotoga lettingae (strain ATCC BAA-301 / DSM 14385 / NBRC 107922 / TMO) (Thermotoga lettingae).